The sequence spans 593 residues: Tyrosine-protein phosphatase non-receptor type 11 (593 aa).

The residue at position 2 (Thr2) is an N-acetylthreonine. SH2 domains lie at 6–102 (WFHP…KYPL) and 112–216 (WFHG…KQPL). 2 positions are modified to phosphotyrosine: Tyr62 and Tyr66. One can recognise a Tyrosine-protein phosphatase domain in the interval 247 to 517 (FWEEFETLQQ…EAQYRFIYMA (271 aa)). Substrate-binding positions include Asp425, 459–465 (CSAGIGR), and Gln506. The active-site Phosphocysteine intermediate is the Cys459. Residues Tyr542 and Tyr580 each carry the phosphotyrosine; by PDGFR modification.

Belongs to the protein-tyrosine phosphatase family. Non-receptor class 2 subfamily. As to quaternary structure, interacts with phosphorylated SIT1, LIME1, BCAR3 and MZPL1. Interacts with FCRL4, FCRL6, ANKHD1, SHB, INPP5D/SHIP1 and CD84. Interacts with MILR1 (tyrosine-phosphorylated). Interacts with FLT1 (tyrosine-phosphorylated), FLT3 (tyrosine-phosphorylated), FLT4 (tyrosine-phosphorylated), KIT and GRB2. Interacts with PTPNS1. Interacts with KIR2DL1; the interaction is enhanced by ARRB2. Interacts (via SH2 domain) with TEK/TIE2 (tyrosine phosphorylated). Interacts with GAB2. Interacts with TERT; the interaction retains TERT in the nucleus. Interacts with PECAM1 and FER. Interacts with EPHA2 (activated); participates in PTK2/FAK1 dephosphorylation in EPHA2 downstream signaling. Interacts with PDGFRA (tyrosine phosphorylated). Interacts with PDGFRB (tyrosine phosphorylated); this interaction increases the PTPN11 phosphatase activity. Interacts with ROS1; this mediates PTPN11 phosphorylation. Interacts with CEACAM1 (via cytoplasmic domain); this interaction depends on the monomer/dimer equilibrium and is phosphorylation-dependent. Interacts with MPIG6B (via ITIM motif). Interacts with SIGLEC10. Interacts with CLEC12B (via ITIM motif); this interaction triggers dephosphorylation and activation of PTPN11. Interacts (via SH2 domains) with NEDD9/CAS-L; the interaction is enhanced when NEDD9/CAS-L is tyrosine phosphorylated. Post-translationally, phosphorylated on Tyr-542 and Tyr-580 upon receptor protein tyrosine kinase activation; which creates a binding site for GRB2 and other SH2-containing proteins. Phosphorylated upon activation of the receptor-type kinase FLT3. Phosphorylated upon activation of the receptor-type kinase PDGFRA. Phosphorylated by activated PDGFRB. Expressed in brain, muscle and lung.

It is found in the cytoplasm. It catalyses the reaction O-phospho-L-tyrosyl-[protein] + H2O = L-tyrosyl-[protein] + phosphate. With respect to regulation, inhibited by orthovanadate, molybdate and spermidine. Its function is as follows. Acts downstream of various receptor and cytoplasmic protein tyrosine kinases to participate in the signal transduction from the cell surface to the nucleus. Positively regulates MAPK signal transduction pathway. Dephosphorylates GAB1, ARHGAP35 and EGFR. Dephosphorylates ROCK2 at 'Tyr-722' resulting in stimulation of its RhoA binding activity. Dephosphorylates CDC73. Dephosphorylates SOX9 on tyrosine residues, leading to inactivate SOX9 and promote ossification. Dephosphorylates tyrosine-phosphorylated NEDD9/CAS-L. The protein is Tyrosine-protein phosphatase non-receptor type 11 (Ptpn11) of Rattus norvegicus (Rat).